Here is a 268-residue protein sequence, read N- to C-terminus: MSLIYLVVLALVQGITEFLPISSSAHLILAPQVLGQADQGPLIDVMAHAGSLLAVLVYFRSDIVSVAMGKLALLQGRVTPGGRLALLVAASMPPIIIVAGALVAFDLVDALRSPRVIAIATLAFALPLWLADRYGRQTITIETMSFKHAALIGIAQLFALIPGASRSGVTMTAARGLGLTRTDSARFSMLMAIPVIAAFGLVSLIELVRADGMAAGASLSDGLIVAGLSFVTAWAAIAVLMRLVERIGFLPFALYRVGLGLALLVFFV.

A run of 8 helical transmembrane segments spans residues 1–21, 39–59, 85–105, 110–130, 144–164, 187–207, 221–241, and 247–267; these read MSLI…FLPI, QGPL…LVYF, ALLV…LVAF, ALRS…PLWL, MSFK…IPGA, FSML…LIEL, DGLI…AVLM, and IGFL…LVFF.

This sequence belongs to the UppP family.

It is found in the cell inner membrane. The enzyme catalyses di-trans,octa-cis-undecaprenyl diphosphate + H2O = di-trans,octa-cis-undecaprenyl phosphate + phosphate + H(+). Its function is as follows. Catalyzes the dephosphorylation of undecaprenyl diphosphate (UPP). Confers resistance to bacitracin. The polypeptide is Undecaprenyl-diphosphatase (Maricaulis maris (strain MCS10) (Caulobacter maris)).